We begin with the raw amino-acid sequence, 358 residues long: tRNA-specific 2-thiouridylase MnmA (358 aa).

Residues 6-13 (ALSGGVDS) and Met-32 each bind ATP. Cys-103 functions as the Nucleophile in the catalytic mechanism. Residues Cys-103 and Cys-201 are joined by a disulfide bond. Gly-127 serves as a coordination point for ATP. The interval 151–153 (KDQ) is interaction with tRNA. Cys-201 functions as the Cysteine persulfide intermediate in the catalytic mechanism.

Belongs to the MnmA/TRMU family.

It is found in the cytoplasm. It carries out the reaction S-sulfanyl-L-cysteinyl-[protein] + uridine(34) in tRNA + AH2 + ATP = 2-thiouridine(34) in tRNA + L-cysteinyl-[protein] + A + AMP + diphosphate + H(+). Catalyzes the 2-thiolation of uridine at the wobble position (U34) of tRNA, leading to the formation of s(2)U34. The chain is tRNA-specific 2-thiouridylase MnmA from Thermotoga neapolitana (strain ATCC 49049 / DSM 4359 / NBRC 107923 / NS-E).